The sequence spans 565 residues: Oxygen-dependent choline dehydrogenase (565 aa).

7 to 36 (DYIICGAGSAGNVLATRLTEDPGVTVLLLE) provides a ligand contact to FAD. His-474 acts as the Proton acceptor in catalysis.

Belongs to the GMC oxidoreductase family. It depends on FAD as a cofactor.

The enzyme catalyses choline + A = betaine aldehyde + AH2. It carries out the reaction betaine aldehyde + NAD(+) + H2O = glycine betaine + NADH + 2 H(+). Its pathway is amine and polyamine biosynthesis; betaine biosynthesis via choline pathway; betaine aldehyde from choline (cytochrome c reductase route): step 1/1. In terms of biological role, involved in the biosynthesis of the osmoprotectant glycine betaine. Catalyzes the oxidation of choline to betaine aldehyde and betaine aldehyde to glycine betaine at the same rate. The protein is Oxygen-dependent choline dehydrogenase of Burkholderia pseudomallei (strain K96243).